A 98-amino-acid polypeptide reads, in one-letter code: YcgL domain-containing protein CJA_2437 (98 aa).

The YcgL domain maps to 3-87; the sequence is IIAEIYRSPK…RDLVDAEAKR (85 aa).

This is YcgL domain-containing protein CJA_2437 from Cellvibrio japonicus (strain Ueda107) (Pseudomonas fluorescens subsp. cellulosa).